The chain runs to 690 residues: Glycine--tRNA ligase beta subunit (690 aa).

It belongs to the class-II aminoacyl-tRNA synthetase family. In terms of assembly, tetramer of two alpha and two beta subunits.

Its subcellular location is the cytoplasm. The catalysed reaction is tRNA(Gly) + glycine + ATP = glycyl-tRNA(Gly) + AMP + diphosphate. The polypeptide is Glycine--tRNA ligase beta subunit (Pediococcus pentosaceus (strain ATCC 25745 / CCUG 21536 / LMG 10740 / 183-1w)).